The primary structure comprises 271 residues: Phosphatidylglycerol--prolipoprotein diacylglyceryl transferase (271 aa).

The next 7 helical transmembrane spans lie at 18–38 (IFGL…LVAL), 60–80 (YFIW…ILIY), 103–123 (FVGI…IATY), 137–157 (LDLV…GNFL), 181–201 (PSQL…LLLI), 209–229 (GELI…CEFF), and 236–256 (IGFV…MFLL). Arg152 contributes to the a 1,2-diacyl-sn-glycero-3-phospho-(1'-sn-glycerol) binding site.

It belongs to the Lgt family.

It is found in the cell inner membrane. It carries out the reaction L-cysteinyl-[prolipoprotein] + a 1,2-diacyl-sn-glycero-3-phospho-(1'-sn-glycerol) = an S-1,2-diacyl-sn-glyceryl-L-cysteinyl-[prolipoprotein] + sn-glycerol 1-phosphate + H(+). It functions in the pathway protein modification; lipoprotein biosynthesis (diacylglyceryl transfer). Its function is as follows. Catalyzes the transfer of the diacylglyceryl group from phosphatidylglycerol to the sulfhydryl group of the N-terminal cysteine of a prolipoprotein, the first step in the formation of mature lipoproteins. In Campylobacter lari (strain RM2100 / D67 / ATCC BAA-1060), this protein is Phosphatidylglycerol--prolipoprotein diacylglyceryl transferase.